Here is a 239-residue protein sequence, read N- to C-terminus: Pyridoxine 5'-phosphate synthase (239 aa).

Asn-7 provides a ligand contact to 3-amino-2-oxopropyl phosphate. 1-deoxy-D-xylulose 5-phosphate is bound at residue 9–10; it reads DH. 3-amino-2-oxopropyl phosphate is bound at residue Arg-18. His-43 acts as the Proton acceptor in catalysis. The 1-deoxy-D-xylulose 5-phosphate site is built by Arg-45 and His-50. The active-site Proton acceptor is Glu-70. Thr-100 provides a ligand contact to 1-deoxy-D-xylulose 5-phosphate. His-191 (proton donor) is an active-site residue. Residues Gly-192 and 213 to 214 contribute to the 3-amino-2-oxopropyl phosphate site; that span reads GH.

It belongs to the PNP synthase family. In terms of assembly, homooctamer; tetramer of dimers.

It is found in the cytoplasm. It catalyses the reaction 3-amino-2-oxopropyl phosphate + 1-deoxy-D-xylulose 5-phosphate = pyridoxine 5'-phosphate + phosphate + 2 H2O + H(+). It participates in cofactor biosynthesis; pyridoxine 5'-phosphate biosynthesis; pyridoxine 5'-phosphate from D-erythrose 4-phosphate: step 5/5. Its function is as follows. Catalyzes the complicated ring closure reaction between the two acyclic compounds 1-deoxy-D-xylulose-5-phosphate (DXP) and 3-amino-2-oxopropyl phosphate (1-amino-acetone-3-phosphate or AAP) to form pyridoxine 5'-phosphate (PNP) and inorganic phosphate. The protein is Pyridoxine 5'-phosphate synthase of Desulforapulum autotrophicum (strain ATCC 43914 / DSM 3382 / VKM B-1955 / HRM2) (Desulfobacterium autotrophicum).